The following is a 424-amino-acid chain: Tyrosine--tRNA ligase (424 aa).

Position 37 (tyrosine 37) interacts with L-tyrosine. Positions 42 to 51 (PTADSLHLGH) match the 'HIGH' region motif. Residue lysine 144 is modified to N6-acetyllysine. Positions 175 and 179 each coordinate L-tyrosine. A 'KMSKS' region motif is present at residues 235–239 (KFGKT). Lysine 238 is a binding site for ATP. An S4 RNA-binding domain is found at 357 to 414 (ADLMQALVDSELQPSRGQARKTIASNAITINGEKQSDPEYFFKEEDRLFGRFTLLRRG).

It belongs to the class-I aminoacyl-tRNA synthetase family. TyrS type 1 subfamily. As to quaternary structure, homodimer.

Its subcellular location is the cytoplasm. It catalyses the reaction tRNA(Tyr) + L-tyrosine + ATP = L-tyrosyl-tRNA(Tyr) + AMP + diphosphate + H(+). Catalyzes the attachment of tyrosine to tRNA(Tyr) in a two-step reaction: tyrosine is first activated by ATP to form Tyr-AMP and then transferred to the acceptor end of tRNA(Tyr). This chain is Tyrosine--tRNA ligase, found in Shigella dysenteriae serotype 1 (strain Sd197).